Here is a 941-residue protein sequence, read N- to C-terminus: Glycine dehydrogenase (decarboxylating) (941 aa).

An N6-(pyridoxal phosphate)lysine modification is found at Lys692.

This sequence belongs to the GcvP family. The glycine cleavage system is composed of four proteins: P, T, L and H. It depends on pyridoxal 5'-phosphate as a cofactor.

It catalyses the reaction N(6)-[(R)-lipoyl]-L-lysyl-[glycine-cleavage complex H protein] + glycine + H(+) = N(6)-[(R)-S(8)-aminomethyldihydrolipoyl]-L-lysyl-[glycine-cleavage complex H protein] + CO2. The glycine cleavage system catalyzes the degradation of glycine. The P protein binds the alpha-amino group of glycine through its pyridoxal phosphate cofactor; CO(2) is released and the remaining methylamine moiety is then transferred to the lipoamide cofactor of the H protein. This is Glycine dehydrogenase (decarboxylating) from Mycobacterium tuberculosis (strain ATCC 25177 / H37Ra).